Here is an 872-residue protein sequence, read N- to C-terminus: Alanine--tRNA ligase (872 aa).

Zn(2+)-binding residues include histidine 567, histidine 571, cysteine 669, and histidine 673.

It belongs to the class-II aminoacyl-tRNA synthetase family. Zn(2+) serves as cofactor.

The protein localises to the cytoplasm. The enzyme catalyses tRNA(Ala) + L-alanine + ATP = L-alanyl-tRNA(Ala) + AMP + diphosphate. Catalyzes the attachment of alanine to tRNA(Ala) in a two-step reaction: alanine is first activated by ATP to form Ala-AMP and then transferred to the acceptor end of tRNA(Ala). Also edits incorrectly charged Ser-tRNA(Ala) and Gly-tRNA(Ala) via its editing domain. This chain is Alanine--tRNA ligase, found in Streptococcus thermophilus (strain CNRZ 1066).